Here is an 89-residue protein sequence, read N- to C-terminus: MLFEIIYIVSSLFYIVSIIYTLMRIKHINTVAKKEEIRKEIIEYMRSDEVTNIIVKALNESDINKKLNAIVLALCTHVQELKKSKLCEG.

Methionine 1 is a topological domain (cytoplasmic). Residues leucine 2–leucine 22 form a helical membrane-spanning segment. Residues methionine 23–glycine 89 lie on the Extracellular side of the membrane.

It localises to the host membrane. This is an uncharacterized protein from Sulfolobus islandicus filamentous virus (isolate Iceland/Hveragerdi) (SIFV).